Reading from the N-terminus, the 135-residue chain is Salivary protein 15 (135 aa).

The signal sequence occupies residues 1–21 (MESFVAMKVVCILFLVGVVAA). An N-linked (GlcNAc...) asparagine glycan is attached at asparagine 22. The required for Borrelia OspC-binding stretch occupies residues 48–67 (PNYISNHQKLALKLLKICKD). N-linked (GlcNAc...) asparagine glycans are attached at residues asparagine 92 and asparagine 104. The tract at residues 116-135 (GPNGQTCAEKNKCVGHIPGC) is CD4-binding.

The protein belongs to the salp15 family. As to quaternary structure, monomer. Interacts with host CD4. Interacts with host DC-SIGN (CD209). In terms of assembly, (Microbial infection) Interacts with Borrelia outer surface protein C (OspC). Post-translationally, glycosylated. As to expression, expressed in salivary glands. Detected in host skin, at the site of natural inoculation.

It is found in the secreted. Salivary tick protein that downregulates host immune system by binding to both dendritic cells, and CD4(+) T cells. Specifically binds to the CD4 coreceptor on T cells. This interaction prevents the activation of the Src kinase, Lck, and its downstream substrate Zap-70, and results in deficient activation of PLCgamma1, the repression of calcium fluxes triggered by T-cell antigen receptor (TCR) ligation, and a subsequent reduction in interleukin-2 production. This salivary protein also binds to DC-SIGN (CD209) on dendritic cells (DC) and activates the Raf-1 kinase/MEK signaling pathway that results in down-regulating expression of pro-inflammatory cytokines. Furthermore, it inhibits T cell proliferation induced by DCs. It also inhibits in vitro keratinocyte inflammation induced by Borrelia burgdorferi or by the major outer surface protein (OspC) of Borrelia. In addition, it downregulates chemokines and monocyte chemoattractant protein 1, as well as several antimicrobial peptides such as defensins, cathelicidin, psoriasin, and RNase 7. Apart from its immunomodulatory activities, it is also associated with protection of Borrelia spirochetes from antibody-mediated killing through its binding to OspC. In vivo, tests on different immune disease animal models show promising therapeutic results, e.g., in inhibiting HIV infection, experimental autoimmune encephalomyelitis, transplantation rejection, and asthma. In terms of biological role, (Microbial infection) Protects Borrelia garinii (strains A87S and VSBP) from host complement-mediated killing. Its function is as follows. (Microbial infection) Partially protects Borrelia burgdorferi (strains VS215 and B31) from host complement-mediated killing. The protein is Salivary protein 15 of Ixodes scapularis (Black-legged tick).